The following is a 1274-amino-acid chain: ABC multidrug transporter E (1274 aa).

N-linked (GlcNAc...) asparagine glycosylation is present at N48. Residues 120 to 344 form the ABC transmembrane type-1 1 domain; the sequence is FCFRVTGLRV…IASPLIIVSK (225 aa). Helical transmembrane passes span 183–203, 205–225, 280–300, and 321–341; these read LALL…LTLV, SSAL…MTKI, IFGI…SLAF, and VFFS…PLII. Residues 377-629 form the ABC transporter 1 domain; that stretch reads IIFRDVRFTY…EGGVYRDLVN (253 aa). ATP is bound at residue 412–419; it reads GPSGSGKS. Residues N473 and N580 are each glycosylated (N-linked (GlcNAc...) asparagine). 2 helical membrane passes run 697–717 and 737–757; these read VAVL…SWLF and FWAL…STVG. Residues 697-984 form the ABC transmembrane type-1 2 domain; sequence VAVLISTAGA…FFSFASNFAQ (288 aa). The N-linked (GlcNAc...) asparagine glycan is linked to N792. 3 helical membrane-spanning segments follow: residues 818-838, 840-860, and 924-944; these read FPLI…SFGW, LSLV…FMRI, and LIFA…FWYG. The 247-residue stretch at 1023 to 1269 folds into the ABC transporter 2 domain; that stretch reads VEFHDVSFRY…KGTYWQMVSS (247 aa). An N-linked (GlcNAc...) asparagine glycan is attached at N1044. Residue 1057 to 1064 coordinates ATP; sequence GPSGCGKT. A glycan (N-linked (GlcNAc...) asparagine) is linked at N1117.

It belongs to the ABC transporter superfamily. ABCB family. Multidrug resistance exporter (TC 3.A.1.201) subfamily.

It localises to the cell membrane. Functionally, pleiotropic ABC efflux transporter that may be involved in A.fumigatus adaptation to azoles such as vorizonazole. The protein is ABC multidrug transporter E of Aspergillus fumigatus (strain ATCC MYA-4609 / CBS 101355 / FGSC A1100 / Af293) (Neosartorya fumigata).